Reading from the N-terminus, the 383-residue chain is tRNA-specific 2-thiouridylase MnmA (383 aa).

ATP-binding positions include 16–23 and leucine 42; that span reads AMSGGVDS. Catalysis depends on cysteine 110, which acts as the Nucleophile. Cysteine 110 and cysteine 209 are oxidised to a cystine. Glycine 134 lines the ATP pocket. The interval 159–161 is interaction with tRNA; sequence KDQ. Cysteine 209 serves as the catalytic Cysteine persulfide intermediate.

It belongs to the MnmA/TRMU family.

The protein localises to the cytoplasm. The enzyme catalyses S-sulfanyl-L-cysteinyl-[protein] + uridine(34) in tRNA + AH2 + ATP = 2-thiouridine(34) in tRNA + L-cysteinyl-[protein] + A + AMP + diphosphate + H(+). In terms of biological role, catalyzes the 2-thiolation of uridine at the wobble position (U34) of tRNA, leading to the formation of s(2)U34. The sequence is that of tRNA-specific 2-thiouridylase MnmA from Caulobacter vibrioides (strain ATCC 19089 / CIP 103742 / CB 15) (Caulobacter crescentus).